The primary structure comprises 156 residues: Small ribosomal subunit protein uS7 (156 aa).

It belongs to the universal ribosomal protein uS7 family. Part of the 30S ribosomal subunit. Contacts proteins S9 and S11.

Its function is as follows. One of the primary rRNA binding proteins, it binds directly to 16S rRNA where it nucleates assembly of the head domain of the 30S subunit. Is located at the subunit interface close to the decoding center, probably blocks exit of the E-site tRNA. This is Small ribosomal subunit protein uS7 from Treponema denticola (strain ATCC 35405 / DSM 14222 / CIP 103919 / JCM 8153 / KCTC 15104).